A 567-amino-acid chain; its full sequence is Restriction of telomere capping protein 5 (567 aa).

Residues 289–515 (KVMTPALLAQ…IQDVEVWGCG (227 aa)) form the TLDc domain.

This sequence belongs to the RTC5 family.

It localises to the cytoplasm. Its function is as follows. May be involved in a process influencing telomere capping. This Saccharomyces cerevisiae (strain RM11-1a) (Baker's yeast) protein is Restriction of telomere capping protein 5 (RTC5).